We begin with the raw amino-acid sequence, 191 residues long: Ribosomal RNA small subunit methyltransferase G (191 aa).

S-adenosyl-L-methionine-binding positions include glycine 62, phenylalanine 67, 111 to 112 (IE), and arginine 124.

The protein belongs to the methyltransferase superfamily. RNA methyltransferase RsmG family.

It is found in the cytoplasm. It catalyses the reaction guanosine(527) in 16S rRNA + S-adenosyl-L-methionine = N(7)-methylguanosine(527) in 16S rRNA + S-adenosyl-L-homocysteine. Functionally, specifically methylates the N7 position of guanine in position 527 of 16S rRNA. This Rickettsia typhi (strain ATCC VR-144 / Wilmington) protein is Ribosomal RNA small subunit methyltransferase G.